A 329-amino-acid chain; its full sequence is tRNA dimethylallyltransferase (329 aa).

Position 24 to 31 (24 to 31 (GSTGIGKT)) interacts with ATP. Residue 26–31 (TGIGKT) coordinates substrate. Residues 49-52 (DSMQ) are interaction with substrate tRNA.

The protein belongs to the IPP transferase family. As to quaternary structure, monomer. Requires Mg(2+) as cofactor.

The enzyme catalyses adenosine(37) in tRNA + dimethylallyl diphosphate = N(6)-dimethylallyladenosine(37) in tRNA + diphosphate. Catalyzes the transfer of a dimethylallyl group onto the adenine at position 37 in tRNAs that read codons beginning with uridine, leading to the formation of N6-(dimethylallyl)adenosine (i(6)A). This chain is tRNA dimethylallyltransferase, found in Methylacidiphilum infernorum (isolate V4) (Methylokorus infernorum (strain V4)).